The following is a 110-amino-acid chain: Large ribosomal subunit protein uL22 (110 aa).

Belongs to the universal ribosomal protein uL22 family. Part of the 50S ribosomal subunit.

Functionally, this protein binds specifically to 23S rRNA; its binding is stimulated by other ribosomal proteins, e.g. L4, L17, and L20. It is important during the early stages of 50S assembly. It makes multiple contacts with different domains of the 23S rRNA in the assembled 50S subunit and ribosome. The globular domain of the protein is located near the polypeptide exit tunnel on the outside of the subunit, while an extended beta-hairpin is found that lines the wall of the exit tunnel in the center of the 70S ribosome. This Haemophilus ducreyi (strain 35000HP / ATCC 700724) protein is Large ribosomal subunit protein uL22.